We begin with the raw amino-acid sequence, 139 residues long: Interleukin-5 (139 aa).

The N-terminal stretch at Met1–Tyr19 is a signal peptide. N-linked (GlcNAc...) asparagine glycans are attached at residues Asn48, Asn77, and Asn91.

Belongs to the IL-5 family. In terms of assembly, homodimer; disulfide-linked. Interacts with IL5RA. Interacts with CSF2RB.

The protein localises to the secreted. Homodimeric cytokine expressed predominantly by T-lymphocytes and NK cells that plays an important role in the survival, differentiation, and chemotaxis of eosinophils. Also acts on activated and resting B-cells to induce immunoglobulin production, growth, and differentiation. Mechanistically, exerts its biological effects through a receptor composed of IL5RA subunit and the cytokine receptor common subunit beta/CSF2RB. Binding to the receptor leads to activation of various kinases including LYN, SYK and JAK2 and thereby propagates signals through the RAS-MAPK and JAK-STAT5 pathways respectively. The protein is Interleukin-5 (IL5) of Notamacropus eugenii (Tammar wallaby).